Consider the following 224-residue polypeptide: Peroxiredoxin-6 (224 aa).

One can recognise a Thioredoxin domain in the interval 5–169; sequence LLLGDEAPNF…ILRVVDSLQL (165 aa). Residues 31-40 form a required and sufficient for targeting to lysosomes and lamellar bodies region; sequence DSWGILFSHP. Phosphothreonine is present on threonine 44. Catalysis depends on cysteine 47, which acts as the Cysteine sulfenic acid (-SOH) intermediate; for peroxidase activity. Lysine 63 carries the post-translational modification N6-acetyllysine. A Phosphotyrosine modification is found at tyrosine 89. The residue at position 93 (threonine 93) is a Phosphothreonine. The active-site For phospholipase activity is aspartate 140. A Phosphothreonine; by MAPK modification is found at threonine 177. At lysine 209 the chain carries N6-acetyllysine; alternate. N6-succinyllysine; alternate is present on lysine 209.

It belongs to the peroxiredoxin family. Prx6 subfamily. As to quaternary structure, homodimer. Interacts with GSTP1; mediates PRDX6 glutathionylation and regeneration. Interacts with APEX1. Interacts with STH. May interact with FAM168B. May interact with HTR2A. Post-translationally, irreversibly inactivated by overoxidation of Cys-47 to sulfinic acid (Cys-SO(2)H) and sulfonic acid (Cys-SO(3)H) forms upon oxidative stress. In terms of processing, phosphorylation at Thr-177 by MAP kinases increases the phospholipase activity of the enzyme. The phosphorylated form exhibits a greater lysophosphatidylcholine acyltransferase activity compared to the non-phosphorylated form. As to expression, highly expressed in heart, kidney and liver. Moderate expression in brain and stomach. Very low levels in intestine.

It localises to the cytoplasm. The protein resides in the lysosome. It carries out the reaction a hydroperoxide + 2 glutathione = an alcohol + glutathione disulfide + H2O. The catalysed reaction is a 1,2-diacyl-sn-glycero-3-phosphocholine + H2O = a 1-acyl-sn-glycero-3-phosphocholine + a fatty acid + H(+). The enzyme catalyses a 1-acyl-sn-glycero-3-phosphocholine + an acyl-CoA = a 1,2-diacyl-sn-glycero-3-phosphocholine + CoA. It catalyses the reaction 1-hexadecanoyl-sn-glycero-3-phosphocholine + hexadecanoyl-CoA = 1,2-dihexadecanoyl-sn-glycero-3-phosphocholine + CoA. It carries out the reaction 1,2-dihexadecanoyl-sn-glycero-3-phosphocholine + H2O = 1-hexadecanoyl-sn-glycero-3-phosphocholine + hexadecanoate + H(+). Its activity is regulated as follows. MJ33 or lithium;[(2R)-1-hexadecoxy-3-(2,2,2-trifluoroethoxy)propan-2-yl] methyl phosphate inhibits its phospholipase A2 activity. CI-976 or 2,2-Dimethyl-N-(2,4,6-trimethoxyphenyl)dodecanamide inhibits its lysophosphatidylcholine acyltransferase activity. Thiol-specific peroxidase that catalyzes the reduction of hydrogen peroxide and organic hydroperoxides to water and alcohols, respectively. Can reduce H(2)O(2) and short chain organic, fatty acid, and phospholipid hydroperoxides. Has phospholipase activity. Can either reduce the oxidized sn-2 fatty acyl group of phospholipids (peroxidase activity) or hydrolyze the sn-2 ester bond of phospholipids (phospholipase activity). These activities are dependent on binding to phospholipids at acidic pH and to oxidized phospholipds at cytosolic pH. Plays a role in cell protection against oxidative stress by detoxifying peroxides and in phospholipid homeostasis. Exhibits acyl-CoA-dependent lysophospholipid acyltransferase which mediates the conversion of lysophosphatidylcholine (1-acyl-sn-glycero-3-phosphocholine or LPC) into phosphatidylcholine (1,2-diacyl-sn-glycero-3-phosphocholine or PC). Shows a clear preference for LPC as the lysophospholipid and for palmitoyl CoA as the fatty acyl substrate. This chain is Peroxiredoxin-6 (Prdx6), found in Mus musculus (Mouse).